A 697-amino-acid chain; its full sequence is Elongation factor G 2 (697 aa).

In terms of domain architecture, tr-type G spans 5-280; that stretch reads SLYRNIGIFA…AVVDYLPSPT (276 aa). Residues 14-21, 78-82, and 132-135 each bind GTP; these read AHVDAGKT, DTPGH, and NKLD.

Belongs to the TRAFAC class translation factor GTPase superfamily. Classic translation factor GTPase family. EF-G/EF-2 subfamily.

Its subcellular location is the cytoplasm. Its function is as follows. Catalyzes the GTP-dependent ribosomal translocation step during translation elongation. During this step, the ribosome changes from the pre-translocational (PRE) to the post-translocational (POST) state as the newly formed A-site-bound peptidyl-tRNA and P-site-bound deacylated tRNA move to the P and E sites, respectively. Catalyzes the coordinated movement of the two tRNA molecules, the mRNA and conformational changes in the ribosome. The chain is Elongation factor G 2 from Saccharophagus degradans (strain 2-40 / ATCC 43961 / DSM 17024).